Reading from the N-terminus, the 90-residue chain is Small ribosomal subunit protein uS15c (90 aa).

The protein belongs to the universal ribosomal protein uS15 family. As to quaternary structure, part of the 30S ribosomal subunit.

Its subcellular location is the plastid. It localises to the chloroplast. This chain is Small ribosomal subunit protein uS15c (rps15-A), found in Zea mays (Maize).